The following is a 338-amino-acid chain: Porphobilinogen deaminase (338 aa).

Cysteine 265 carries the post-translational modification S-(dipyrrolylmethanemethyl)cysteine.

This sequence belongs to the HMBS family. The cofactor is dipyrromethane.

The catalysed reaction is 4 porphobilinogen + H2O = hydroxymethylbilane + 4 NH4(+). It functions in the pathway porphyrin-containing compound metabolism; protoporphyrin-IX biosynthesis; coproporphyrinogen-III from 5-aminolevulinate: step 2/4. Tetrapolymerization of the monopyrrole PBG into the hydroxymethylbilane pre-uroporphyrinogen in several discrete steps. In Yarrowia lipolytica (strain CLIB 122 / E 150) (Yeast), this protein is Porphobilinogen deaminase (HEM3).